Reading from the N-terminus, the 506-residue chain is 2-isopropylmalate synthase (506 aa).

Positions 4 to 266 (ILFMDTTLRD…EPSMTLKEIK (263 aa)) constitute a Pyruvate carboxyltransferase domain. The Mn(2+) site is built by Asp-13, His-201, His-203, and Asn-237. A regulatory domain region spans residues 390-506 (NITQLQVHFV…KLKSFIQLVK (117 aa)).

This sequence belongs to the alpha-IPM synthase/homocitrate synthase family. LeuA type 1 subfamily. As to quaternary structure, homodimer. It depends on Mn(2+) as a cofactor.

It localises to the cytoplasm. It carries out the reaction 3-methyl-2-oxobutanoate + acetyl-CoA + H2O = (2S)-2-isopropylmalate + CoA + H(+). It participates in amino-acid biosynthesis; L-leucine biosynthesis; L-leucine from 3-methyl-2-oxobutanoate: step 1/4. Catalyzes the condensation of the acetyl group of acetyl-CoA with 3-methyl-2-oxobutanoate (2-ketoisovalerate) to form 3-carboxy-3-hydroxy-4-methylpentanoate (2-isopropylmalate). This chain is 2-isopropylmalate synthase, found in Bacillus thuringiensis (strain Al Hakam).